We begin with the raw amino-acid sequence, 322 residues long: Mas-related G-protein coupled receptor member X1 (322 aa).

The Extracellular portion of the chain corresponds to 1–30; that stretch reads MDPTISSHDTESTPLNETGHPNCTPILTLS. Asn16 carries an N-linked (GlcNAc...) asparagine glycan. Residues 31–51 form a helical membrane-spanning segment; sequence FLVLITTLVGLAGNTIVLWLL. The Cytoplasmic segment spans residues 52–59; it reads GFRMRRKA. The chain crosses the membrane as a helical span at residues 60 to 80; sequence ISVYILNLALADSFFLCCHFI. The Extracellular segment spans residues 81–100; the sequence is DSLLRIIDFYGLYAHKLSKD. The helical transmembrane segment at 101-121 threads the bilayer; that stretch reads ILGNAAIIPYISGLSILSAIS. The Cytoplasmic portion of the chain corresponds to 122 to 142; it reads TERCLCVLWPIWYHCHRPRNM. A helical membrane pass occupies residues 143–163; it reads SAIICALIWVLSFLMGILDWF. Topologically, residues 164–179 are extracellular; that stretch reads SGFLGETHHHLWKNVD. A helical transmembrane segment spans residues 180–200; sequence FIITAFLIFLFMLLSGSSLAL. The Cytoplasmic portion of the chain corresponds to 201–223; it reads LLRILCGPRRKPLSRLYVTIALT. Residues 224 to 244 form a helical membrane-spanning segment; the sequence is VMVYLICGLPLGLYLFLLYWF. The Extracellular portion of the chain corresponds to 245–257; sequence GVHLHYPFCHIYQ. Residues 258-278 form a helical membrane-spanning segment; sequence VTAVLSCVNSSANPIIYFLVG. At 279–322 the chain is on the cytoplasmic side; that stretch reads SFRQHRKHRSLKRVLKRALEDTPEEDEYTDSHLHKTTEISESRY.

This sequence belongs to the G-protein coupled receptor 1 family. Mas subfamily. In terms of tissue distribution, expressed in a subset of IB4-positive small diameter nociceptive dorsal root neurons.

The protein resides in the cell membrane. In terms of biological role, orphan receptor activated by neuropeptides terminating in Arg-Phe or Arg-Phe-amide. Mediates its action by association with G proteins that activate a phosphatidylinositol-calcium second messenger system. Its effect is mediated by G(q) and G(11) proteins. May regulate the function of nociceptive neurons by modulation of pain perception. The polypeptide is Mas-related G-protein coupled receptor member X1 (Mus musculus (Mouse)).